Here is a 211-residue protein sequence, read N- to C-terminus: Thymidylate kinase (211 aa).

ATP is bound at residue 10–17 (GVEGCGKT).

The protein belongs to the thymidylate kinase family.

The catalysed reaction is dTMP + ATP = dTDP + ADP. Functionally, phosphorylation of dTMP to form dTDP in both de novo and salvage pathways of dTTP synthesis. This Nostoc sp. (strain PCC 7120 / SAG 25.82 / UTEX 2576) protein is Thymidylate kinase.